The following is a 388-amino-acid chain: Succinate--CoA ligase [ADP-forming] subunit beta (388 aa).

The ATP-grasp domain maps to 9 to 244; the sequence is KSLFAEYGLP…PSQDDAREAH (236 aa). Residues K46, 53 to 55, E99, T102, and E107 each bind ATP; that span reads GRG. Mg(2+)-binding residues include N199 and D213. Residues N264 and 321-323 contribute to the substrate site; that span reads GIV.

This sequence belongs to the succinate/malate CoA ligase beta subunit family. In terms of assembly, heterotetramer of two alpha and two beta subunits. It depends on Mg(2+) as a cofactor.

The enzyme catalyses succinate + ATP + CoA = succinyl-CoA + ADP + phosphate. The catalysed reaction is GTP + succinate + CoA = succinyl-CoA + GDP + phosphate. It participates in carbohydrate metabolism; tricarboxylic acid cycle; succinate from succinyl-CoA (ligase route): step 1/1. Its function is as follows. Succinyl-CoA synthetase functions in the citric acid cycle (TCA), coupling the hydrolysis of succinyl-CoA to the synthesis of either ATP or GTP and thus represents the only step of substrate-level phosphorylation in the TCA. The beta subunit provides nucleotide specificity of the enzyme and binds the substrate succinate, while the binding sites for coenzyme A and phosphate are found in the alpha subunit. This chain is Succinate--CoA ligase [ADP-forming] subunit beta, found in Shewanella oneidensis (strain ATCC 700550 / JCM 31522 / CIP 106686 / LMG 19005 / NCIMB 14063 / MR-1).